Here is a 199-residue protein sequence, read N- to C-terminus: Probable GTP-binding protein EngB (199 aa).

The EngB-type G domain occupies 28 to 199 (DLPEIALAGR…ESWDTILEYL (172 aa)). Residues 36–43 (GRSNVGKS), 63–67 (GKTQL), 81–84 (DVPG), 148–151 (TKAD), and 180–182 (FSS) contribute to the GTP site. Mg(2+)-binding residues include S43 and T65.

The protein belongs to the TRAFAC class TrmE-Era-EngA-EngB-Septin-like GTPase superfamily. EngB GTPase family. The cofactor is Mg(2+).

Functionally, necessary for normal cell division and for the maintenance of normal septation. This chain is Probable GTP-binding protein EngB, found in Streptococcus equi subsp. equi (strain 4047).